A 109-amino-acid polypeptide reads, in one-letter code: Glutaredoxin 4 (109 aa).

A Glutaredoxin domain is found at 4 to 106 (LDKIKKQISE…TLLADVAAKY (103 aa)). A glutathione-binding site is contributed by Lys-21. Cys-29 lines the [2Fe-2S] cluster pocket. Glutathione is bound by residues Arg-58, Phe-70, and 83 to 84 (CD).

This sequence belongs to the glutaredoxin family. Monothiol subfamily. Homodimer.

It is found in the cytoplasm. Functionally, monothiol glutaredoxin involved in the biogenesis of iron-sulfur clusters. In Pasteurella multocida (strain Pm70), this protein is Glutaredoxin 4 (grxD).